The chain runs to 145 residues: Large ribosomal subunit protein uL14m (145 aa).

Residues 1 to 30 (MAALTGLWGSFAHVSRAFSQRCFSTSGSLS) constitute a mitochondrion transit peptide.

It belongs to the universal ribosomal protein uL14 family. In terms of assembly, component of the mitochondrial ribosome large subunit (39S) which comprises a 16S rRNA and about 50 distinct proteins. Interacts with MALSU1.

It is found in the mitochondrion. Its function is as follows. May form part of 2 intersubunit bridges in the assembled ribosome. Upon binding to MALSU1, intersubunit bridge formation is blocked, preventing ribosome formation and repressing translation. This is Large ribosomal subunit protein uL14m (Mrpl14) from Mus musculus (Mouse).